The primary structure comprises 208 residues: MIERTFIKENVMETLVDEYLKNKLPRAGYSHMDVKKTPIGTRITVFAEKPGFVIGRKGKMVKELTETIATKYGVNKPQIEVKQIESPDLDAGVVAQKIASSLERGMHFRRVAHSAIRRVMAQGAKGVVVIVSGKLTGERSRTEKYMEGYMKHCGEPSEELVDQCHKIAKLKLGVVGVTVKIMPPEITLPDEIVIKDVPSKTTVETVEE.

In terms of domain architecture, KH type-2 spans 16–85 (VDEYLKNKLP…KPQIEVKQIE (70 aa)).

It belongs to the universal ribosomal protein uS3 family. Part of the 30S ribosomal subunit.

Binds the lower part of the 30S subunit head. The chain is Small ribosomal subunit protein uS3 from Methanococcus aeolicus (strain ATCC BAA-1280 / DSM 17508 / OCM 812 / Nankai-3).